Consider the following 182-residue polypeptide: Thioredoxin F-type, chloroplastic (182 aa).

The N-terminal 69 residues, 1-69, are a transit peptide targeting the chloroplast; it reads MALNLCTSPK…SVRSSLETAG (69 aa). One can recognise a Thioredoxin domain in the interval 70–181; sequence PTVTVGKVTE…LVAAIDTVRS (112 aa). Catalysis depends on nucleophile residues cysteine 106 and cysteine 109. Cysteines 106 and 109 form a disulfide.

It belongs to the thioredoxin family. Plant F-type subfamily. As to quaternary structure, forms a complex with heterodimeric ferredoxin-thioredoxin reductase (FTR) and ferredoxin.

The protein localises to the plastid. The protein resides in the chloroplast. In terms of biological role, participates in various redox reactions through the reversible oxidation of the active center dithiol to a disulfide. The F form is known to activate a number of enzymes of the photosynthetic carbon cycle. The chain is Thioredoxin F-type, chloroplastic from Pisum sativum (Garden pea).